A 1196-amino-acid polypeptide reads, in one-letter code: Phosphoglucan, water dikinase, chloroplastic (1196 aa).

A chloroplast-targeting transit peptide spans 1-54; it reads MESIGSHCCSSPFTFITRNSSSSLPRLVNITHRVNLSHQSHRLRNSNSRLTCTA. N-acetylthreonine is present on Thr55. The region spanning 66–166 is the CBM20 domain; sequence KKDGSGTKVR…NFSVVCHWDA (101 aa). The interval 174 to 200 is disordered; the sequence is PQEVGNDDDVGDGGHERDNHDVGDDRV. A compositionally biased stretch (basic and acidic residues) spans 185-200; the sequence is DGGHERDNHDVGDDRV. His759 serves as the catalytic Tele-phosphohistidine intermediate. Positions 804–855 are disordered; it reads LSTEGRSRTSKSSATKKTDKNSLSKKKTDKKSLSIDDEESKPGSSSSNSLLY.

This sequence belongs to the PEP-utilizing enzyme family. Homodimer. It depends on Mg(2+) as a cofactor. In all starch containing tissues (e.g. roots, leaves, stems, inflorescence and siliques).

It is found in the plastid. Its subcellular location is the chloroplast. It catalyses the reaction [(1-&gt;4)-6-phospho-alpha-D-glucosyl](n) + n ATP + n H2O = [(1-&gt;4)-3,6-bisphospho-alpha-D-glucosyl](n) + n AMP + n phosphate + 2n H(+). In terms of biological role, mediates the incorporation of phosphate into starch-like phospho-alpha-glucan, mostly at the C-3 position of glucose units. Required for starch degradation, suggesting that the phosphate content of starch regulates its degradability. The sequence is that of Phosphoglucan, water dikinase, chloroplastic (GWD3) from Arabidopsis thaliana (Mouse-ear cress).